Reading from the N-terminus, the 396-residue chain is Ribosomal RNA large subunit methyltransferase I (396 aa).

The PUA domain occupies 2-81; that stretch reads TVRLILAKGR…EVIDCAFFIR (80 aa).

This sequence belongs to the methyltransferase superfamily. RlmI family.

The protein resides in the cytoplasm. The catalysed reaction is cytidine(1962) in 23S rRNA + S-adenosyl-L-methionine = 5-methylcytidine(1962) in 23S rRNA + S-adenosyl-L-homocysteine + H(+). Specifically methylates the cytosine at position 1962 (m5C1962) of 23S rRNA. The chain is Ribosomal RNA large subunit methyltransferase I from Yersinia pestis bv. Antiqua (strain Antiqua).